We begin with the raw amino-acid sequence, 400 residues long: Argininosuccinate synthase (400 aa).

9-17 (AYSGGLDTS) provides a ligand contact to ATP. Tyrosine 87 lines the L-citrulline pocket. Glycine 117 contributes to the ATP binding site. Threonine 119, asparagine 123, and aspartate 124 together coordinate L-aspartate. Residue asparagine 123 coordinates L-citrulline. 5 residues coordinate L-citrulline: arginine 127, serine 176, serine 185, glutamate 261, and tyrosine 273.

The protein belongs to the argininosuccinate synthase family. Type 1 subfamily. As to quaternary structure, homotetramer.

It localises to the cytoplasm. The catalysed reaction is L-citrulline + L-aspartate + ATP = 2-(N(omega)-L-arginino)succinate + AMP + diphosphate + H(+). It participates in amino-acid biosynthesis; L-arginine biosynthesis; L-arginine from L-ornithine and carbamoyl phosphate: step 2/3. In Chlorobium luteolum (strain DSM 273 / BCRC 81028 / 2530) (Pelodictyon luteolum), this protein is Argininosuccinate synthase.